Reading from the N-terminus, the 254-residue chain is Sec-independent protein translocase protein TatC (254 aa).

A run of 6 helical transmembrane segments spans residues 40–60 (IFLS…FVKP), 82–104 (FFFV…FILY), 125–145 (VVLG…YALI), 172–192 (FVLL…IQVV), 210–230 (FVIL…DPLT), and 233–253 (LLAG…RLLG).

Belongs to the TatC family. As to quaternary structure, forms a complex with TatA.

The protein resides in the cell inner membrane. In terms of biological role, part of the twin-arginine translocation (Tat) system that transports large folded proteins containing a characteristic twin-arginine motif in their signal peptide across membranes. The protein is Sec-independent protein translocase protein TatC of Synechocystis sp. (strain ATCC 27184 / PCC 6803 / Kazusa).